A 241-amino-acid polypeptide reads, in one-letter code: Beta-nerve growth factor (241 aa).

Positions 1–18 are cleaved as a signal peptide; that stretch reads MSMLFYTLITAFLIGVQA. Positions 19-121 are excised as a propeptide; the sequence is EPYTDSNVPE…PFNRTHRSKR (103 aa). Residues Asn69 and Asn114 are each glycosylated (N-linked (GlcNAc...) asparagine). 3 disulfide bridges follow: Cys136/Cys201, Cys179/Cys229, and Cys189/Cys231. A 1-acyl-sn-glycero-3-phospho-(1D-myo-inositol)-binding residues include Arg171, Tyr173, and Lys209. Arg171 is a binding site for a 1-acyl-sn-glycero-3-phospho-L-serine. Lys209 provides a ligand contact to a 1-acyl-sn-glycero-3-phospho-L-serine.

The protein belongs to the NGF-beta family. As to quaternary structure, homodimer. The homodimer interacts with a single NTRK1 chain. The homodimer interacts with a single NGFR chain. The NGF dimer interacts with a single SORCS2 chain (via extracellular domain). The NGF precursor (proNGF) binds to a receptor complex formed by SORT1 and NGFR, which leads to NGF endocytosis. Both mature NGF and the immature NGF precursor (proNGF) interact with SORCS2 and with the heterodimer formed by SORCS2 and NGFR (via extracellular domains). The NGF precursor (proNGF) has much higher affinity for SORCS2 than mature NGF. The NGF precursor (proNGF) has much higher affinity for SORT1 than mature NGF. Interacts with ADAM10 in a divalent cation-dependent manner. Interacts with SORCS3. Detected in submaxillary gland (at protein level). Highly expressed in male submaxillary gland. Levels are much lower in female submaxillary gland.

The protein localises to the secreted. Its subcellular location is the endosome lumen. Its function is as follows. Nerve growth factor is important for the development and maintenance of the sympathetic and sensory nervous systems. Extracellular ligand for the NTRK1 and NGFR receptors, activates cellular signaling cascades to regulate neuronal proliferation, differentiation and survival. The immature NGF precursor (proNGF) functions as a ligand for the heterodimeric receptor formed by SORCS2 and NGFR, and activates cellular signaling cascades that lead to inactivation of RAC1 and/or RAC2, reorganization of the actin cytoskeleton and neuronal growth cone collapse. In contrast to mature NGF, the precursor form (proNGF) promotes neuronal apoptosis (in vitro). Inhibits metalloproteinase-dependent proteolysis of platelet glycoprotein VI. Binds lysophosphatidylinositol and lysophosphatidylserine between the two chains of the homodimer. The lipid-bound form promotes histamine relase from mast cells, contrary to the lipid-free form. This Mus musculus (Mouse) protein is Beta-nerve growth factor (Ngf).